The sequence spans 187 residues: Elongation factor P (187 aa).

The protein belongs to the elongation factor P family.

It localises to the cytoplasm. It participates in protein biosynthesis; polypeptide chain elongation. In terms of biological role, involved in peptide bond synthesis. Stimulates efficient translation and peptide-bond synthesis on native or reconstituted 70S ribosomes in vitro. Probably functions indirectly by altering the affinity of the ribosome for aminoacyl-tRNA, thus increasing their reactivity as acceptors for peptidyl transferase. In Synechococcus sp. (strain WH7803), this protein is Elongation factor P.